The chain runs to 110 residues: UPF0122 protein SH1678 (110 aa).

The protein belongs to the UPF0122 family.

Functionally, might take part in the signal recognition particle (SRP) pathway. This is inferred from the conservation of its genetic proximity to ftsY/ffh. May be a regulatory protein. This Staphylococcus haemolyticus (strain JCSC1435) protein is UPF0122 protein SH1678.